The sequence spans 230 residues: MLQKEHASALEKLRVIWLHKKKIEAELQSRHAESTKFLSKIKLKESEIYGLKTKQETCQKELTDCQTLKEEPKEQKKENNKNDENSKKTIEKYEQEIAGLKEKIEGLEEKVKNNYSDENSSLKEELKQCETRIRQLTGGGAIEHYSQNETAHFSRNQKADEPLFFDRGNIQHHIPQKLLLGRELVQTLEEAKVKKLEEREQMDKHPQDRDNKDKEVNEQPDNEEQDYKEH.

Disordered stretches follow at residues 63–90 and 194–230; these read TDCQTLKEEPKEQKKENNKNDENSKKTI and KKLEEREQMDKHPQDRDNKDKEVNEQPDNEEQDYKEH. The span at 194 to 217 shows a compositional bias: basic and acidic residues; the sequence is KKLEEREQMDKHPQDRDNKDKEVN.

This is an uncharacterized protein from Caenorhabditis elegans.